Here is a 367-residue protein sequence, read N- to C-terminus: Beta sliding clamp (367 aa).

Belongs to the beta sliding clamp family. In terms of assembly, forms a ring-shaped head-to-tail homodimer around DNA which binds and tethers DNA polymerases and other proteins to the DNA. The DNA replisome complex has a single clamp-loading complex (3 tau and 1 each of delta, delta', psi and chi subunits) which binds 3 Pol III cores (1 core on the leading strand and 2 on the lagging strand) each with a beta sliding clamp dimer. Additional proteins in the replisome are other copies of gamma, psi and chi, Ssb, DNA helicase and RNA primase.

The protein localises to the cytoplasm. Its function is as follows. Confers DNA tethering and processivity to DNA polymerases and other proteins. Acts as a clamp, forming a ring around DNA (a reaction catalyzed by the clamp-loading complex) which diffuses in an ATP-independent manner freely and bidirectionally along dsDNA. Initially characterized for its ability to contact the catalytic subunit of DNA polymerase III (Pol III), a complex, multichain enzyme responsible for most of the replicative synthesis in bacteria; Pol III exhibits 3'-5' exonuclease proofreading activity. The beta chain is required for initiation of replication as well as for processivity of DNA replication. This is Beta sliding clamp (dnaN) from Pseudomonas aeruginosa (strain ATCC 15692 / DSM 22644 / CIP 104116 / JCM 14847 / LMG 12228 / 1C / PRS 101 / PAO1).